Reading from the N-terminus, the 205-residue chain is Gap junction epsilon-1 protein (205 aa).

Residues 1-22 are Cytoplasmic-facing; that stretch reads MSLNYIKNFYEGCVKPPTVIGQ. A helical membrane pass occupies residues 23 to 43; sequence FHTLFFGSVRMFFLGVLGFAV. Topologically, residues 44–74 are extracellular; the sequence is YGNEALHFSCDPDKREINLFCYNQFRPITPQ. Intrachain disulfides connect Cys-53–Cys-161 and Cys-64–Cys-147. A helical transmembrane segment spans residues 75-95; sequence VFWALQLVIVLLPGAIFHLYA. Residues 96–111 are Cytoplasmic-facing; that stretch reads ACKSINQDCILQKPVY. The helical transmembrane segment at 112–132 threads the bilayer; the sequence is TVIYVLSVLLRISLEVFAFWL. Residues 133 to 170 lie on the Extracellular side of the membrane; that stretch reads QIHLFGFQVKPIYLCDTESLGKKPNILKCMVPEHFEKT. A helical membrane pass occupies residues 171–191; the sequence is IFLIAMYTFTVITMVLCVAEV. Residues 192–205 lie on the Cytoplasmic side of the membrane; that stretch reads FEIIFRRSCFLFKR.

This sequence belongs to the connexin family. Beta-type (group I) subfamily. A connexon is composed of a hexamer of connexins. Highly expressed in lens, where it is mainly found in lens fibers and to a lesser extent in lens epithelium. Weakly expressed in retina. Not detected in other tissues tested.

The protein localises to the cell membrane. In terms of biological role, mediates calcium-independent ATP release, suggesting activity as a hemichannel. Does not form functional gap junctions. May play a non-essential role in eye lens development. This is Gap junction epsilon-1 protein from Mus musculus (Mouse).